The chain runs to 171 residues: MTAKKKEVDDEKRRRILERNRIAASKFRQKKKEWIKELEQTANAAFEQSKRLQLLLSQLQQEAFRLKSQLLAHQGCQCSVKIRSVLTDFQTAHNALHSQHMAYRPVQPPPGDNMLESVVSVSPTQMHPSLQGLPPNQHPQMPPSSQQPNSDDVQQHMFSAAGLPRSLGGPI.

In terms of domain architecture, bZIP spans 10 to 73; sequence DEKRRRILER…FRLKSQLLAH (64 aa). The interval 12 to 51 is basic motif; it reads KRRRILERNRIAASKFRQKKKEWIKELEQTANAAFEQSKR. Positions 52 to 66 are leucine-zipper; it reads LQLLLSQLQQEAFRL. The interval 125–171 is disordered; it reads QMHPSLQGLPPNQHPQMPPSSQQPNSDDVQQHMFSAAGLPRSLGGPI. The segment covering 143-152 has biased composition (low complexity); that stretch reads PSSQQPNSDD.

This sequence belongs to the bZIP family. In terms of assembly, heterodimer of pcr1/mts2 and atf1/mts1.

The protein resides in the nucleus. Its function is as follows. Involved in regulation of gene expression for sexual development. Binds and activates CRE sites (cAMP-response elements, also known as M26 meiotic recombination hotspots). This is Transcription factor pcr1 (pcr1) from Schizosaccharomyces pombe (strain 972 / ATCC 24843) (Fission yeast).